We begin with the raw amino-acid sequence, 300 residues long: Aspartate carbamoyltransferase catalytic subunit (300 aa).

Residues arginine 50 and threonine 51 each coordinate carbamoyl phosphate. Lysine 78 contributes to the L-aspartate binding site. Arginine 100, histidine 127, and glutamine 130 together coordinate carbamoyl phosphate. L-aspartate-binding residues include arginine 160 and arginine 210. Residues alanine 253 and proline 254 each coordinate carbamoyl phosphate.

Belongs to the aspartate/ornithine carbamoyltransferase superfamily. ATCase family. As to quaternary structure, heterododecamer (2C3:3R2) of six catalytic PyrB chains organized as two trimers (C3), and six regulatory PyrI chains organized as three dimers (R2).

The catalysed reaction is carbamoyl phosphate + L-aspartate = N-carbamoyl-L-aspartate + phosphate + H(+). It functions in the pathway pyrimidine metabolism; UMP biosynthesis via de novo pathway; (S)-dihydroorotate from bicarbonate: step 2/3. Catalyzes the condensation of carbamoyl phosphate and aspartate to form carbamoyl aspartate and inorganic phosphate, the committed step in the de novo pyrimidine nucleotide biosynthesis pathway. In Staphylococcus saprophyticus subsp. saprophyticus (strain ATCC 15305 / DSM 20229 / NCIMB 8711 / NCTC 7292 / S-41), this protein is Aspartate carbamoyltransferase catalytic subunit.